We begin with the raw amino-acid sequence, 313 residues long: 2,3-dihydroxyphenylpropionate/2,3-dihydroxicinnamic acid 1,2-dioxygenase (313 aa).

His-115 serves as the catalytic Proton donor. His-179 acts as the Proton acceptor in catalysis.

Belongs to the LigB/MhpB extradiol dioxygenase family. As to quaternary structure, homotetramer. Fe(2+) serves as cofactor.

The catalysed reaction is 3-(2,3-dihydroxyphenyl)propanoate + O2 = (2Z,4E)-2-hydroxy-6-oxonona-2,4-dienedioate + H(+). The enzyme catalyses (2E)-3-(2,3-dihydroxyphenyl)prop-2-enoate + O2 = (2Z,4E,7E)-2-hydroxy-6-oxonona-2,4,7-trienedioate + H(+). The protein operates within aromatic compound metabolism; 3-phenylpropanoate degradation. Its function is as follows. Catalyzes the non-heme iron(II)-dependent oxidative cleavage of 2,3-dihydroxyphenylpropionic acid and 2,3-dihydroxicinnamic acid into 2-hydroxy-6-ketononadienedioate and 2-hydroxy-6-ketononatrienedioate, respectively. The chain is 2,3-dihydroxyphenylpropionate/2,3-dihydroxicinnamic acid 1,2-dioxygenase from Mycobacterium ulcerans (strain Agy99).